Consider the following 167-residue polypeptide: Phosphopantetheine adenylyltransferase (167 aa).

Position 9 (threonine 9) interacts with substrate. ATP-binding positions include 9-10 and histidine 17; that span reads TF. Substrate is bound by residues lysine 41, leucine 73, and arginine 87. Residues 88 to 90, glutamate 98, and 123 to 129 each bind ATP; these read GLR and NSYISST.

This sequence belongs to the bacterial CoaD family. Homohexamer. It depends on Mg(2+) as a cofactor.

It is found in the cytoplasm. It catalyses the reaction (R)-4'-phosphopantetheine + ATP + H(+) = 3'-dephospho-CoA + diphosphate. The protein operates within cofactor biosynthesis; coenzyme A biosynthesis; CoA from (R)-pantothenate: step 4/5. In terms of biological role, reversibly transfers an adenylyl group from ATP to 4'-phosphopantetheine, yielding dephospho-CoA (dPCoA) and pyrophosphate. The chain is Phosphopantetheine adenylyltransferase from Chromohalobacter salexigens (strain ATCC BAA-138 / DSM 3043 / CIP 106854 / NCIMB 13768 / 1H11).